We begin with the raw amino-acid sequence, 77 residues long: Sec-independent protein translocase protein TatA (77 aa).

Residues 1-21 form a helical membrane-spanning segment; it reads MGSLSIWHWIVVIAVVLLLFG. Basic and acidic residues predominate over residues 43–60; it reads MQDDDKAPEKTEPVKSID. Positions 43–77 are disordered; it reads MQDDDKAPEKTEPVKSIDHGATPSATRTDVGSKAV.

This sequence belongs to the TatA/E family. As to quaternary structure, the Tat system comprises two distinct complexes: a TatABC complex, containing multiple copies of TatA, TatB and TatC subunits, and a separate TatA complex, containing only TatA subunits. Substrates initially bind to the TatABC complex, which probably triggers association of the separate TatA complex to form the active translocon.

It is found in the cell inner membrane. Its function is as follows. Part of the twin-arginine translocation (Tat) system that transports large folded proteins containing a characteristic twin-arginine motif in their signal peptide across membranes. TatA could form the protein-conducting channel of the Tat system. The polypeptide is Sec-independent protein translocase protein TatA (Bradyrhizobium sp. (strain BTAi1 / ATCC BAA-1182)).